We begin with the raw amino-acid sequence, 377 residues long: Protein-tyrosine sulfotransferase 2 (377 aa).

Residues 1–8 lie on the Cytoplasmic side of the membrane; sequence MRLSMRRA. Residues 9 to 25 form a helical; Signal-anchor for type II membrane protein membrane-spanning segment; it reads LLAAGLALALVLAVHLG. The Lumenal segment spans residues 26–377; sequence QRVLECQAVL…NSTSSHLGSS (352 aa). 78 to 82 provides a ligand contact to 3'-phosphoadenylyl sulfate; the sequence is RSGTT. A disulfide bridge connects residues cysteine 96 and cysteine 156. Glutamate 99 acts as the Proton donor/acceptor in catalysis. An interaction with peptide substrate region spans residues 101–105; that stretch reads RIIPR. 3'-phosphoadenylyl sulfate contacts are provided by arginine 183, serine 191, and arginine 195. Residues cysteine 225 and cysteine 233 are joined by a disulfide bond. Residues tyrosine 238, 285–294, and lysine 300 contribute to the 3'-phosphoadenylyl sulfate site; that span reads STDQVIKPVN. 2 N-linked (GlcNAc...) asparagine glycosylation sites follow: asparagine 343 and asparagine 368.

This sequence belongs to the protein sulfotransferase family. In terms of assembly, homodimer. Can also form heterodimers with TPST1. N-glycosylated.

It is found in the golgi apparatus membrane. It catalyses the reaction L-tyrosyl-[protein] + 3'-phosphoadenylyl sulfate = O-sulfo-L-tyrosine-[protein] + adenosine 3',5'-bisphosphate + H(+). Functionally, catalyzes the O-sulfation of tyrosine residues within acidic motifs of polypeptides, using 3'-phosphoadenylyl sulfate (PAPS) as cosubstrate. In Bos taurus (Bovine), this protein is Protein-tyrosine sulfotransferase 2 (TPST2).